The chain runs to 128 residues: Probable 4-amino-4-deoxy-L-arabinose-phosphoundecaprenol flippase subunit ArnF (128 aa).

The chain crosses the membrane as a helical span at residues 1 to 21 (MGLMWGLFSVIIASAAQLSLG). The Periplasmic segment spans residues 22-35 (YAASHLPPMTQFWD). Residues 36 to 56 (FIAAFFAFGPGARMLVVGLVG) traverse the membrane as a helical segment. At 57–76 (YLLSVFCWYKALHQLALSKA) the chain is on the cytoplasmic side. The helical transmembrane segment at 77–97 (YALLSMSYVLVWIASMVLPGW) threads the bilayer. Topologically, residues 98–100 (EGT) are periplasmic. A helical transmembrane segment spans residues 101–121 (FSLKALLGVACIMSGLMLIFL). Residues 122-128 (PTTKQRY) are Cytoplasmic-facing.

Belongs to the ArnF family. As to quaternary structure, heterodimer of ArnE and ArnF.

The protein resides in the cell inner membrane. It participates in bacterial outer membrane biogenesis; lipopolysaccharide biosynthesis. In terms of biological role, translocates 4-amino-4-deoxy-L-arabinose-phosphoundecaprenol (alpha-L-Ara4N-phosphoundecaprenol) from the cytoplasmic to the periplasmic side of the inner membrane. This chain is Probable 4-amino-4-deoxy-L-arabinose-phosphoundecaprenol flippase subunit ArnF, found in Escherichia fergusonii (strain ATCC 35469 / DSM 13698 / CCUG 18766 / IAM 14443 / JCM 21226 / LMG 7866 / NBRC 102419 / NCTC 12128 / CDC 0568-73).